The primary structure comprises 331 residues: Glyceraldehyde-3-phosphate dehydrogenase (331 aa).

NAD(+) is bound by residues 12–13 (RI), aspartate 34, arginine 78, and threonine 120. Residues 149-151 (SCT), threonine 180, 209-210 (TG), and arginine 232 contribute to the D-glyceraldehyde 3-phosphate site. Residue cysteine 150 is the Nucleophile of the active site. Asparagine 314 is an NAD(+) binding site.

It belongs to the glyceraldehyde-3-phosphate dehydrogenase family. Homotetramer.

It localises to the cytoplasm. The catalysed reaction is D-glyceraldehyde 3-phosphate + phosphate + NAD(+) = (2R)-3-phospho-glyceroyl phosphate + NADH + H(+). It functions in the pathway carbohydrate degradation; glycolysis; pyruvate from D-glyceraldehyde 3-phosphate: step 1/5. In terms of biological role, catalyzes the oxidative phosphorylation of glyceraldehyde 3-phosphate (G3P) to 1,3-bisphosphoglycerate (BPG) using the cofactor NAD. The first reaction step involves the formation of a hemiacetal intermediate between G3P and a cysteine residue, and this hemiacetal intermediate is then oxidized to a thioester, with concomitant reduction of NAD to NADH. The reduced NADH is then exchanged with the second NAD, and the thioester is attacked by a nucleophilic inorganic phosphate to produce BPG. This is Glyceraldehyde-3-phosphate dehydrogenase (gapA) from Salmonella typhi.